The primary structure comprises 470 residues: Uronate isomerase (470 aa).

Belongs to the metallo-dependent hydrolases superfamily. Uronate isomerase family.

It catalyses the reaction D-glucuronate = D-fructuronate. The catalysed reaction is aldehydo-D-galacturonate = keto-D-tagaturonate. Its pathway is carbohydrate metabolism; pentose and glucuronate interconversion. The chain is Uronate isomerase from Sphingopyxis alaskensis (strain DSM 13593 / LMG 18877 / RB2256) (Sphingomonas alaskensis).